Here is a 471-residue protein sequence, read N- to C-terminus: Ribulose bisphosphate carboxylase large chain (471 aa).

2 residues coordinate substrate: Asn-115 and Thr-165. The active-site Proton acceptor is Lys-167. Lys-169 contacts substrate. Lys-193, Asp-195, and Glu-196 together coordinate Mg(2+). Lys-193 carries the post-translational modification N6-carboxylysine. Catalysis depends on His-286, which acts as the Proton acceptor. Substrate-binding residues include Arg-287, His-319, and Ser-371.

Belongs to the RuBisCO large chain family. Type I subfamily. As to quaternary structure, heterohexadecamer of 8 large chains and 8 small chains. Mg(2+) serves as cofactor.

The catalysed reaction is 2 (2R)-3-phosphoglycerate + 2 H(+) = D-ribulose 1,5-bisphosphate + CO2 + H2O. The enzyme catalyses D-ribulose 1,5-bisphosphate + O2 = 2-phosphoglycolate + (2R)-3-phosphoglycerate + 2 H(+). Functionally, ruBisCO catalyzes two reactions: the carboxylation of D-ribulose 1,5-bisphosphate, the primary event in carbon dioxide fixation, as well as the oxidative fragmentation of the pentose substrate. Both reactions occur simultaneously and in competition at the same active site. In Alvinoconcha hessleri symbiotic bacterium, this protein is Ribulose bisphosphate carboxylase large chain.